Reading from the N-terminus, the 352-residue chain is Ion-translocating oxidoreductase complex subunit D (352 aa).

The next 4 membrane-spanning stretches (helical) occupy residues 20–40 (IMLLVLLAAVPGIAAQLWFFG), 42–62 (GTLVQILLASVSALLAEALVL), 89–109 (IPPLAPWWMVVLGTVFAVIIA), and 123–143 (PAMIGYVVLLISFPVQMTSWL). T187 is modified (FMN phosphoryl threonine). 5 consecutive transmembrane segments (helical) span residues 214–234 (ILAGAGWQWVNLAWLAGGVWL), 242–262 (WHIPLSFLVTLALCATLGWLF), 267–287 (LAAPQIHLLSGATMLGAFFIL), 301–321 (LIFGALAGLLVWLIRSFGGYP), and 322–342 (DGVAFAVLLANITVPLIDYYT).

The protein belongs to the NqrB/RnfD family. As to quaternary structure, the complex is composed of six subunits: RsxA, RsxB, RsxC, RsxD, RsxE and RsxG. FMN serves as cofactor.

Its subcellular location is the cell inner membrane. Part of a membrane-bound complex that couples electron transfer with translocation of ions across the membrane. Required to maintain the reduced state of SoxR. The polypeptide is Ion-translocating oxidoreductase complex subunit D (Escherichia coli O127:H6 (strain E2348/69 / EPEC)).